We begin with the raw amino-acid sequence, 408 residues long: NADH-quinone oxidoreductase subunit D (408 aa).

The protein belongs to the complex I 49 kDa subunit family. NDH-1 is composed of 14 different subunits. Subunits NuoB, C, D, E, F, and G constitute the peripheral sector of the complex.

It localises to the cell inner membrane. It carries out the reaction a quinone + NADH + 5 H(+)(in) = a quinol + NAD(+) + 4 H(+)(out). Functionally, NDH-1 shuttles electrons from NADH, via FMN and iron-sulfur (Fe-S) centers, to quinones in the respiratory chain. The immediate electron acceptor for the enzyme in this species is believed to be ubiquinone. Couples the redox reaction to proton translocation (for every two electrons transferred, four hydrogen ions are translocated across the cytoplasmic membrane), and thus conserves the redox energy in a proton gradient. This Campylobacter jejuni subsp. jejuni serotype O:2 (strain ATCC 700819 / NCTC 11168) protein is NADH-quinone oxidoreductase subunit D.